Consider the following 67-residue polypeptide: Small ribosomal subunit protein bS21 (67 aa).

Residues 37 to 52 (EKPSERKAREAAEAVR) show a composition bias toward basic and acidic residues. The tract at residues 37–67 (EKPSERKAREAAEAVRRARKMERKRLEREGF) is disordered.

Belongs to the bacterial ribosomal protein bS21 family.

This Gluconacetobacter diazotrophicus (strain ATCC 49037 / DSM 5601 / CCUG 37298 / CIP 103539 / LMG 7603 / PAl5) protein is Small ribosomal subunit protein bS21.